A 171-amino-acid chain; its full sequence is Secreted thaumatin-like protein calA (171 aa).

An N-terminal signal peptide occupies residues 1-18 (MLFNKIISLAATLATASA). Asparagine 37 and asparagine 141 each carry an N-linked (GlcNAc...) asparagine glycan. 2 disulfide bridges follow: cysteine 130/cysteine 157 and cysteine 135/cysteine 142.

The protein belongs to the thaumatin family.

The protein localises to the secreted. Its subcellular location is the extracellular space. It localises to the extracellular matrix. The protein resides in the cell wall. Its function is as follows. Secreted thaumatin-like protein that, with cetA, plays an essential role in early conidial germination with a possible role in cell wall remodeling. The chain is Secreted thaumatin-like protein calA from Emericella nidulans (strain FGSC A4 / ATCC 38163 / CBS 112.46 / NRRL 194 / M139) (Aspergillus nidulans).